The chain runs to 137 residues: Proofreading thioesterase EntH (137 aa).

The active-site Nucleophile or proton acceptor is the Glu63.

It belongs to the thioesterase PaaI family. Homotetramer. Dimer of dimers. Interacts specifically with the aryl carrier protein (ArCP) domain of EntB.

The protein localises to the cytoplasm. It participates in siderophore biosynthesis; enterobactin biosynthesis. In terms of biological role, required for optimal enterobactin synthesis. Acts as a proofreading enzyme that prevents EntB misacylation by hydrolyzing the thioester bound existing between EntB and wrongly charged molecules. This Cronobacter sakazakii (strain ATCC BAA-894) (Enterobacter sakazakii) protein is Proofreading thioesterase EntH.